The sequence spans 194 residues: Calcium channel flower (194 aa).

Helical transmembrane passes span 34 to 54 (LLGI…VFSI), 59 to 79 (VSCL…MLLE), and 107 to 127 (GLYI…ASLF).

Belongs to the calcium channel flower family. Homomultimer. Associates with the dally/ magu complex.

It localises to the cell membrane. The protein localises to the cytoplasmic vesicle. The protein resides in the secretory vesicle. Its subcellular location is the synaptic vesicle membrane. It is found in the presynaptic cell membrane. It localises to the endosome. With respect to regulation, channel activity is inhibited by La(3+), which reduces Ca(2+) influx and thus inhibits it's function in promoting activity-dependent bulk endocytosis (ADBE) in response to high stimuli. Functionally, transmembrane protein which mediates synaptic endocytosis, fitness-based cell culling, neuronal culling, morphogen gradient scaling, and calcium transport. Regulates synaptic endocytosis and hence couples exo- with endocytosis. Controls two major modes of synaptic vesicle (SV) endocytosis in the synaptic boutons of neuromuscular junctions (NMJs); Ca(2+) channel-independent Clathrin-mediated endocytosis (CME) in response to mild stimulation, and Ca(2+) channel-dependent activity-dependent bulk endocytosis (ADBE) in response to strong stimulation. Functions in ADBE and subsequent SV reformation from bulk endosomes by initiating Ca(2+) channel-dependent phosphatidylinositol 4,5-bisphosphate (PtdIns(4,5)P2) compartmentalization in synaptic boutons. There it acts at the periactive zone to provide the low Ca(2+) levels required to initiate Calcineurin activation and upregulate PtdIns(4,5)P2. Conversely PtdIns(4,5)P2 enhances fwe Ca(2+) channel-activity, establishing a positive feedback loop that induces PtdIns(4,5)P2 microdomain at the periactive zone. These microdomains trigger bulk membrane invagination (i.e. ADBE) by triggering actin polymerization while also promoting localization of fwe to bulk endosomes, thereby removing the ADBE trigger to reduce endocytosis and prevent excess membrane uptake. PtdIns(4,5)P2 then promotes SV reformation from the bulk endosomes, to coordinate ADBE and subsequent SV reformation. Different combinations of the flower isoforms at the cell membrane are also required for the identification and elimination of suboptimal or supernumerary cells during development, regeneration, and adulthood. Required for the recognition and elimination of unfit cells in the developing wing during cell competition. In the developing pupal retina, mediates the elimination of unwanted postmitotic neurons, including supernumerary photoreceptor neurons that form at the periphery of the retina and are contained within incomplete ommatidia units. Also required for efficient elimination and replacement of old neurons by newly generated neurons during regeneration in the adult brain following mechanical injury. Downstream of the flower fitness fingerprints, cells identified as unwanted or unfit are eliminated via apoptosis through the expression of ahuizotl (azot). However, the cells marked for elimination by the flower isoforms only undergo apoptosis if additional thresholds are met; (1) their neighboring fit/healthy cells express different levels of the fwe isoforms, and (2) the levels of the protective signal SPARC expressed by the loser or unwanted cells are unable to inhibit caspase activation. These additional thresholds for flower-mediated apoptosis, allows useful cells to recover from transient and limited stress before they are unnecessarily eliminated. Functions with dally and magu in a mechanism of scaling, which utilises apoptosis to ensure that the dpp morphogen gradient, which mediates organ growth, remains proportional to the size of the growing wing. In this mechanism, fwe represses dally- and Magu-dependent activity in expanding the gradient, and dally/Magu inhibits fwe-dependent apoptosis to keep cell death rate low. When the levels of these different proteins are optimally regulated the gradient correctly scales with organ growth but when this fails, fwe-mediated apoptosis is activated to trim the developing tissue to match the correct size of the gradient. The protein is Calcium channel flower of Drosophila erecta (Fruit fly).